Consider the following 360-residue polypeptide: 3-dehydroquinate synthase (360 aa).

NAD(+)-binding positions include 69–74 (DGEKYK), 103–107 (GVVGD), 127–128 (TT), lysine 140, lysine 149, and 167–170 (TLDT). Zn(2+) is bound by residues glutamate 182, histidine 246, and histidine 263.

This sequence belongs to the sugar phosphate cyclases superfamily. Dehydroquinate synthase family. It depends on Co(2+) as a cofactor. Zn(2+) is required as a cofactor. Requires NAD(+) as cofactor.

The protein localises to the cytoplasm. It carries out the reaction 7-phospho-2-dehydro-3-deoxy-D-arabino-heptonate = 3-dehydroquinate + phosphate. It participates in metabolic intermediate biosynthesis; chorismate biosynthesis; chorismate from D-erythrose 4-phosphate and phosphoenolpyruvate: step 2/7. Its function is as follows. Catalyzes the conversion of 3-deoxy-D-arabino-heptulosonate 7-phosphate (DAHP) to dehydroquinate (DHQ). In Vesicomyosocius okutanii subsp. Calyptogena okutanii (strain HA), this protein is 3-dehydroquinate synthase.